A 229-amino-acid chain; its full sequence is Large ribosomal subunit protein bL25 (229 aa).

Disordered regions lie at residues 1–21 and 187–229; these read MSDA…GASR and PSAL…KGDD. The span at 196 to 207 shows a compositional bias: acidic residues; that stretch reads SEEEEDGEEVDA.

This sequence belongs to the bacterial ribosomal protein bL25 family. CTC subfamily. Part of the 50S ribosomal subunit; part of the 5S rRNA/L5/L18/L25 subcomplex. Contacts the 5S rRNA. Binds to the 5S rRNA independently of L5 and L18.

In terms of biological role, this is one of the proteins that binds to the 5S RNA in the ribosome where it forms part of the central protuberance. In Erythrobacter litoralis (strain HTCC2594), this protein is Large ribosomal subunit protein bL25.